The primary structure comprises 252 residues: Pyrroloquinoline-quinone synthase (252 aa).

Belongs to the PqqC family.

The catalysed reaction is 6-(2-amino-2-carboxyethyl)-7,8-dioxo-1,2,3,4,7,8-hexahydroquinoline-2,4-dicarboxylate + 3 O2 = pyrroloquinoline quinone + 2 H2O2 + 2 H2O + H(+). It participates in cofactor biosynthesis; pyrroloquinoline quinone biosynthesis. Its function is as follows. Ring cyclization and eight-electron oxidation of 3a-(2-amino-2-carboxyethyl)-4,5-dioxo-4,5,6,7,8,9-hexahydroquinoline-7,9-dicarboxylic-acid to PQQ. This chain is Pyrroloquinoline-quinone synthase, found in Acinetobacter baumannii (strain ACICU).